A 350-amino-acid polypeptide reads, in one-letter code: UPF0284 protein MJ1598 (350 aa).

Belongs to the UPF0284 family.

This chain is UPF0284 protein MJ1598, found in Methanocaldococcus jannaschii (strain ATCC 43067 / DSM 2661 / JAL-1 / JCM 10045 / NBRC 100440) (Methanococcus jannaschii).